Here is a 398-residue protein sequence, read N- to C-terminus: Ureide permease 2 (398 aa).

Over 1–10 the chain is Extracellular; that stretch reads MYLVESKGGA. A helical membrane pass occupies residues 11 to 31; it reads IACMLLALLSLGTWPAVLTLL. The Cytoplasmic segment spans residues 32–44; the sequence is ERRGRLPQHTYLD. Residues 45 to 65 form a helical membrane-spanning segment; that stretch reads YSITNLLAAIIIAFTFGQIGS. Over 66-81 the chain is Extracellular; the sequence is TKPDSPNFITQLAQDN. A helical transmembrane segment spans residues 82-102; sequence WPSVMFAMAGGIVLSLGNLST. Topologically, residues 103–104 are cytoplasmic; that stretch reads QY. The chain crosses the membrane as a helical span at residues 105 to 125; the sequence is AWALVGLSVTEVITSSITVVI. The Extracellular portion of the chain corresponds to 126–139; it reads GSTLNYFLDDKINK. Residues 140–160 form a helical membrane-spanning segment; the sequence is AEILFPGVACFLIAVCLGSAV. Over 161–229 the chain is Cytoplasmic; it reads HRSNADDNKA…RAIKVFGKRK (69 aa). The disordered stretch occupies residues 176–200; it reads ETAKQEASGPSTEIGTNSSKDLETN. Residues 183–200 show a composition bias toward polar residues; sequence SGPSTEIGTNSSKDLETN. Residue 221-228 coordinates ATP; sequence AIKVFGKR. A helical membrane pass occupies residues 230–250; it reads IIGLAITFFAGLCFSLFSPAF. Topologically, residues 251–272 are extracellular; it reads NLATNDQWNRLKQGVPKLVVYT. Residues 273–293 form a helical membrane-spanning segment; sequence AFFYFSVSCFIIALILNVVFL. The Cytoplasmic portion of the chain corresponds to 294–315; sequence YYPVLGLPKSSFKAYLNDWNGR. A helical transmembrane segment spans residues 316-336; the sequence is YWAFLAGFLCGFGNGLQFMGG. The Extracellular segment spans residues 337–341; sequence QAAGY. The chain crosses the membrane as a helical span at residues 342 to 362; sequence AAADSVQALPLVSTFWGVVLF. Over 363-371 the chain is Cytoplasmic; that stretch reads GEYRRSSRK. A helical transmembrane segment spans residues 372–392; sequence TYLLLFCMLFMFISAVAVLMA. Residues 393–398 lie on the Extracellular side of the membrane; sequence SSGHRK.

It belongs to the plant ureide permease (TC 2.A.7.19) family. As to expression, expressed in root xylem, cotyledons and leaves. Expressed in leaf blades, petioles, trichomes, stems, flower stigma, the upper part of pedicels, sepals, and the top and bottom parts of carpels in siliques.

Its subcellular location is the membrane. Its function is as follows. Proton-coupled transporter that transports a wide spectrum of oxo derivatives of heterocyclic nitrogen compounds, including allantoin, uric acid and xanthine, but not adenine. Mediates high affinity transport of uracil and 5-fluorouracil (a toxic uracil analog). Mediates transport of free pyrimidines and may function during early seedling development in salvage pathways, by the utilization of pyrimidines from seed storage tissue. The sequence is that of Ureide permease 2 from Arabidopsis thaliana (Mouse-ear cress).